The chain runs to 364 residues: Melatonin receptor type 1B (364 aa).

At methionine 1–methionine 42 the chain is on the extracellular side. A glycan (N-linked (GlcNAc...) asparagine) is linked at asparagine 4. The helical transmembrane segment at leucine 43–leucine 63 threads the bilayer. Residues serine 64–asparagine 76 are Cytoplasmic-facing. Residues leucine 77–isoleucine 97 form a helical membrane-spanning segment. Topologically, residues leucine 98 to alanine 115 are extracellular. Cysteine 113 and cysteine 190 are joined by a disulfide. The chain crosses the membrane as a helical span at residues serine 116–isoleucine 136. Topologically, residues asparagine 137–tryptophan 155 are cytoplasmic. A helical transmembrane segment spans residues tyrosine 156 to phenylalanine 176. At phenylalanine 177–tyrosine 200 the chain is on the extracellular side. The helical transmembrane segment at threonine 201–leucine 221 threads the bilayer. The Cytoplasmic portion of the chain corresponds to arginine 222–methionine 253. The chain crosses the membrane as a helical span at residues phenylalanine 254 to valine 274. Topologically, residues alanine 275 to glutamate 287 are extracellular. Residues glycine 288 to tyrosine 308 traverse the membrane as a helical segment. The Cytoplasmic portion of the chain corresponds to glycine 309–leucine 364. The interval glutamate 343–leucine 364 is disordered. Low complexity predominate over residues alanine 352–leucine 364.

Belongs to the G-protein coupled receptor 1 family.

It is found in the cell membrane. In terms of biological role, high affinity receptor for melatonin. The activity of this receptor is mediated by pertussis toxin sensitive G proteins that inhibits adenylate cyclase activity. This chain is Melatonin receptor type 1B (Mtnr1b), found in Mus musculus (Mouse).